Consider the following 475-residue polypeptide: Aspartyl/glutamyl-tRNA(Asn/Gln) amidotransferase subunit B (475 aa).

This sequence belongs to the GatB/GatE family. GatB subfamily. In terms of assembly, heterotrimer of A, B and C subunits.

The catalysed reaction is L-glutamyl-tRNA(Gln) + L-glutamine + ATP + H2O = L-glutaminyl-tRNA(Gln) + L-glutamate + ADP + phosphate + H(+). The enzyme catalyses L-aspartyl-tRNA(Asn) + L-glutamine + ATP + H2O = L-asparaginyl-tRNA(Asn) + L-glutamate + ADP + phosphate + 2 H(+). Its function is as follows. Allows the formation of correctly charged Asn-tRNA(Asn) or Gln-tRNA(Gln) through the transamidation of misacylated Asp-tRNA(Asn) or Glu-tRNA(Gln) in organisms which lack either or both of asparaginyl-tRNA or glutaminyl-tRNA synthetases. The reaction takes place in the presence of glutamine and ATP through an activated phospho-Asp-tRNA(Asn) or phospho-Glu-tRNA(Gln). The protein is Aspartyl/glutamyl-tRNA(Asn/Gln) amidotransferase subunit B of Lysinibacillus sphaericus (strain C3-41).